The chain runs to 478 residues: NADH-quinone oxidoreductase subunit N (478 aa).

Helical transmembrane passes span 5-25 (LASP…VGVA), 37-57 (MLTL…ALGL), 68-88 (FAVM…VLSL), 99-119 (FEFP…VSAS), 121-141 (FMTL…LAAF), 156-176 (FVLG…IYGF), 199-219 (LTVG…AAPF), 231-251 (PTPV…AMML), 268-288 (VVAL…IGQT), 293-313 (LMAY…AAGS), 320-340 (LLIY…CILA), 365-385 (ALLL…SGFF), 401-421 (LLWG…YYYL), and 446-466 (VVAV…APIL).

The protein belongs to the complex I subunit 2 family. NDH-1 is composed of 14 different subunits. Subunits NuoA, H, J, K, L, M, N constitute the membrane sector of the complex.

It is found in the cell inner membrane. It carries out the reaction a quinone + NADH + 5 H(+)(in) = a quinol + NAD(+) + 4 H(+)(out). NDH-1 shuttles electrons from NADH, via FMN and iron-sulfur (Fe-S) centers, to quinones in the respiratory chain. The immediate electron acceptor for the enzyme in this species is believed to be ubiquinone. Couples the redox reaction to proton translocation (for every two electrons transferred, four hydrogen ions are translocated across the cytoplasmic membrane), and thus conserves the redox energy in a proton gradient. The polypeptide is NADH-quinone oxidoreductase subunit N (Granulibacter bethesdensis (strain ATCC BAA-1260 / CGDNIH1)).